Here is a 199-residue protein sequence, read N- to C-terminus: FMN-dependent NADH:quinone oxidoreductase 2 (199 aa).

Residues S10, 16 to 18 (SVS), and 96 to 99 (MYNF) contribute to the FMN site.

It belongs to the azoreductase type 1 family. In terms of assembly, homodimer. FMN is required as a cofactor.

The enzyme catalyses 2 a quinone + NADH + H(+) = 2 a 1,4-benzosemiquinone + NAD(+). The catalysed reaction is N,N-dimethyl-1,4-phenylenediamine + anthranilate + 2 NAD(+) = 2-(4-dimethylaminophenyl)diazenylbenzoate + 2 NADH + 2 H(+). Functionally, quinone reductase that provides resistance to thiol-specific stress caused by electrophilic quinones. Its function is as follows. Also exhibits azoreductase activity. Catalyzes the reductive cleavage of the azo bond in aromatic azo compounds to the corresponding amines. The protein is FMN-dependent NADH:quinone oxidoreductase 2 of Pseudomonas fluorescens (strain Pf0-1).